We begin with the raw amino-acid sequence, 257 residues long: UPF0246 protein swp_3736 (257 aa).

Belongs to the UPF0246 family.

The polypeptide is UPF0246 protein swp_3736 (Shewanella piezotolerans (strain WP3 / JCM 13877)).